The chain runs to 511 residues: Prolyl 3-hydroxylase OGFOD1 (511 aa).

A disordered region spans residues 1-20 (MTGKRGTAAGTDGSGNKKGK). The Fe2OG dioxygenase domain maps to 138–240 (KTVDISCAQY…RLSVSGWFHG (103 aa)). Fe cation-binding residues include H156 and D158. Position 170 (Y170) interacts with 2-oxoglutarate. A Fe cation-binding site is contributed by H219. R231 is a binding site for 2-oxoglutarate. A disordered region spans residues 372–403 (NEESDEGEGPSEPNTVSQQGASSEDDKVPSCS).

Belongs to the TPA1 family. Monomer. It depends on Fe(2+) as a cofactor. The cofactor is L-ascorbate.

It is found in the cytoplasm. Its subcellular location is the nucleus. The catalysed reaction is [ribosomal protein uS12]-L-proline + 2-oxoglutarate + O2 = [ribosomal protein uS12]-(3S)-3-hydroxy-L-proline + succinate + CO2. Prolyl 3-hydroxylase that catalyzes 3-hydroxylation of 'Pro-62' of small ribosomal subunit uS12 (rps23), thereby regulating protein translation termination efficiency. Involved in stress granule formation. The polypeptide is Prolyl 3-hydroxylase OGFOD1 (ogfod1) (Xenopus laevis (African clawed frog)).